The sequence spans 195 residues: Toxin protein Tse4 (195 aa).

4 helical membrane-spanning segments follow: residues 20–40 (ASGG…ITLL), 116–136 (YVEL…LFGL), 140–160 (LLAA…GASM), and 171–191 (ALLM…AAYL).

It is found in the host membrane. The protein localises to the secreted. In terms of biological role, toxin secreted by the H1 type VI (H1-T6SS) secretion system into the periplasm of recipient cells. The protein is Toxin protein Tse4 of Pseudomonas aeruginosa (strain ATCC 15692 / DSM 22644 / CIP 104116 / JCM 14847 / LMG 12228 / 1C / PRS 101 / PAO1).